A 138-amino-acid polypeptide reads, in one-letter code: Glutaredoxin-like protein C5orf63 (138 aa).

A disulfide bond links Cys41 and Cys44. Residues 55 to 64 (ENRQPYKDQK) show a composition bias toward basic and acidic residues. The segment at 55 to 88 (ENRQPYKDQKLPGTRRRRSPSSPSHPHMASQSGK) is disordered.

The protein belongs to the glutaredoxin family. YDR286C subfamily.

This Homo sapiens (Human) protein is Glutaredoxin-like protein C5orf63 (C5orf63).